We begin with the raw amino-acid sequence, 394 residues long: Ribulose bisphosphate carboxylase large chain (394 aa).

The residue at position 5 (Lys-5) is an N6,N6,N6-trimethyllysine. 2 residues coordinate substrate: Asn-114 and Thr-164. Lys-166 acts as the Proton acceptor in catalysis. Substrate is bound at residue Lys-168. Mg(2+) contacts are provided by Lys-192, Asp-194, and Glu-195. Lys-192 carries the N6-carboxylysine modification. His-285 acts as the Proton acceptor in catalysis. Residues Arg-286, His-318, and Ser-370 each contribute to the substrate site.

This sequence belongs to the RuBisCO large chain family. Type I subfamily. Heterohexadecamer of 8 large chains and 8 small chains. The cofactor is Mg(2+).

It is found in the plastid. The protein localises to the chloroplast. The catalysed reaction is 2 (2R)-3-phosphoglycerate + 2 H(+) = D-ribulose 1,5-bisphosphate + CO2 + H2O. It carries out the reaction D-ribulose 1,5-bisphosphate + O2 = 2-phosphoglycolate + (2R)-3-phosphoglycerate + 2 H(+). In terms of biological role, ruBisCO catalyzes two reactions: the carboxylation of D-ribulose 1,5-bisphosphate, the primary event in carbon dioxide fixation, as well as the oxidative fragmentation of the pentose substrate in the photorespiration process. Both reactions occur simultaneously and in competition at the same active site. This Victoria cruziana (Santa Cruz water lily) protein is Ribulose bisphosphate carboxylase large chain (rbcL).